The primary structure comprises 939 residues: Valine--tRNA ligase (939 aa).

A 'HIGH' region motif is present at residues 45-55 (PNVTGTLHMGH). The 'KMSKS' region motif lies at 549–553 (KMSKS). Lys552 lines the ATP pocket. A coiled-coil region spans residues 876–939 (AAETARLRKE…KIRVQLVKLA (64 aa)).

Belongs to the class-I aminoacyl-tRNA synthetase family. ValS type 1 subfamily. In terms of assembly, monomer.

Its subcellular location is the cytoplasm. It carries out the reaction tRNA(Val) + L-valine + ATP = L-valyl-tRNA(Val) + AMP + diphosphate. Its function is as follows. Catalyzes the attachment of valine to tRNA(Val). As ValRS can inadvertently accommodate and process structurally similar amino acids such as threonine, to avoid such errors, it has a 'posttransfer' editing activity that hydrolyzes mischarged Thr-tRNA(Val) in a tRNA-dependent manner. This is Valine--tRNA ligase from Chromobacterium violaceum (strain ATCC 12472 / DSM 30191 / JCM 1249 / CCUG 213 / NBRC 12614 / NCIMB 9131 / NCTC 9757 / MK).